Reading from the N-terminus, the 247-residue chain is Chaperone protein AfaB (247 aa).

The first 29 residues, 1-29, serve as a signal peptide directing secretion; the sequence is MKMRAVAVFTGMLTGVLSVAGLLSAGAYA.

The protein belongs to the periplasmic pilus chaperone family.

It is found in the periplasm. Functionally, involved in the biogenesis of the AFA-III afimbrial adhesin. In Escherichia coli, this protein is Chaperone protein AfaB (afaB).